Consider the following 460-residue polypeptide: Benzyl alcohol O-benzoyltransferase (460 aa).

Residues H167 and D382 each act as proton acceptor in the active site.

Belongs to the plant acyltransferase family. Specifically expressed in flowers, mainly in the limb of flowers corollas, and, at low levels, in roots, stems, sepals and leaves.

The enzyme catalyses benzyl alcohol + benzoyl-CoA = benzyl benzoate + CoA. It catalyses the reaction benzyl alcohol + acetyl-CoA = benzyl acetate + CoA. It carries out the reaction 3-hydroxybenzyl alcohol + acetyl-CoA = 3-hydroxy-benzyl acetate + CoA. The catalysed reaction is 3-hydroxybenzyl alcohol + benzoyl-CoA = 3-hydroxy-benzyl benzoate + CoA. The enzyme catalyses 2-phenylethanol + benzoyl-CoA = phenethyl benzoate + CoA. It catalyses the reaction (3Z)-hex-3-en-1-ol + benzoyl-CoA = (3Z)-hex-3-en-1-yl benzoate + CoA. It carries out the reaction (2E)-geraniol + acetyl-CoA = (2E)-geranyl acetate + CoA. The catalysed reaction is butan-1-ol + benzoyl-CoA = butyl benzoate + CoA. The enzyme catalyses (2E)-geraniol + benzoyl-CoA = (2E)-geranyl benzoate + CoA. It catalyses the reaction octan-1-ol + benzoyl-CoA = octyl benzoate + CoA. It functions in the pathway aromatic compound metabolism; benzoyl-CoA degradation. Functionally, involved in the production of volatile organic compounds (VOCs), including floral volatile benzenoids and phenylpropanoids (FVBP), in flowers of fragrant cultivars (e.g. cv. Mitchell and cv. V26), scent attracting pollinators (e.g. the night-active hawkmoth pollinator Manduca sexta). Acyltransferase that catalyzes the transfer of benzoyl and acetyl moieties to a large variety of potential substrate alcohols, and involved in the formation of volatile esters benzyl benzoate and phenylethyl benzoate from benzoyl-CoA. With acetyl-CoA, mainly active on benzyl alcohol, and, to a lower extent, on 3-hydroxybenzyl alcohol, geraniol, and 2-phenylethanol, but barely active on butanol, 1-octanol, 4-hydroxy-benzyl alcohol, 2-hexanol, cis-3-hexen-1-ol and linalool. With benzoyl-CoA, mainly active on benzyl alcohol, but also efficient on several substrates, including 3-hydroxybenzyl alcohol, 2-phenylethanol, geraniol, butanol, cis-3-hexen-1-ol and 1-octanol. The chain is Benzyl alcohol O-benzoyltransferase from Petunia hybrida (Petunia).